The chain runs to 293 residues: Acetylglutamate kinase (293 aa).

Residues 68 to 69 (GG), Arg90, and Asn189 contribute to the substrate site.

The protein belongs to the acetylglutamate kinase family. ArgB subfamily.

Its subcellular location is the cytoplasm. The enzyme catalyses N-acetyl-L-glutamate + ATP = N-acetyl-L-glutamyl 5-phosphate + ADP. It participates in amino-acid biosynthesis; L-arginine biosynthesis; N(2)-acetyl-L-ornithine from L-glutamate: step 2/4. Functionally, catalyzes the ATP-dependent phosphorylation of N-acetyl-L-glutamate. In Mycobacterium marinum (strain ATCC BAA-535 / M), this protein is Acetylglutamate kinase.